Reading from the N-terminus, the 337-residue chain is Putative 2-aminoethylphosphonate-binding periplasmic protein (337 aa).

An N-terminal signal peptide occupies residues Met1–Ala21.

Belongs to the bacterial solute-binding protein 1 family.

It is found in the periplasm. Functionally, probably part of the PhnSTUV complex (TC 3.A.1.11.5) involved in 2-aminoethylphosphonate import. In Salmonella typhi, this protein is Putative 2-aminoethylphosphonate-binding periplasmic protein (phnS).